The chain runs to 58 residues: uncharacterized protein (58 aa).

The helical transmembrane segment at 18–38 threads the bilayer; it reads WLMIVLLFCSTGMVFLATILE.

Its subcellular location is the membrane. This is an uncharacterized protein from Saccharomyces cerevisiae (strain ATCC 204508 / S288c) (Baker's yeast).